We begin with the raw amino-acid sequence, 371 residues long: GDP-mannose transporter (371 aa).

The Cytoplasmic segment spans residues 1–51; that stretch reads MGVISFYLIGQLLYLIRKKYTTTYRQQQQHQYNMDSKHSTSSSSSGSLATR. A helical transmembrane segment spans residues 52-72; the sequence is ISNSGPISIAAYCLSSILMTV. The Lumenal portion of the chain corresponds to 73–80; that stretch reads TNKYVLSG. A helical membrane pass occupies residues 81 to 101; sequence FSFNLNFFLLAVQSIVCIVTI. At 102–121 the chain is on the cytoplasmic side; the sequence is GSLKSLNIITYRQFNKDEAK. The chain crosses the membrane as a helical span at residues 122–138; it reads KWSPIAFLLVAMIYTSS. The Lumenal segment spans residues 139–145; it reads KALQYLS. The chain crosses the membrane as a helical span at residues 146–162; that stretch reads IPVYTIFKNLTIILIAY. At 163–171 the chain is on the cytoplasmic side; sequence GEVIWFGGK. A helical transmembrane segment spans residues 172–192; that stretch reads VTTMALSSFLLMVLSSVIAYY. Over 193–206 the chain is Lumenal; sequence GDNAAVKSHDDAFA. A helical transmembrane segment spans residues 207 to 227; that stretch reads LYLGYFWMLTNCFASAAFVLI. The Cytoplasmic segment spans residues 228-241; that stretch reads MRKRIKLTNFKDFD. The chain crosses the membrane as a helical span at residues 242–262; it reads TMYYNNLLSIPILLICSFIFE. Over 263 to 281 the chain is Lumenal; the sequence is DWSSANVSLNFPADNRVTT. A glycan (N-linked (GlcNAc...) asparagine) is linked at Asn-268. A helical transmembrane segment spans residues 282–302; sequence ITAMILSGASSVGISYCSAWC. Topologically, residues 303–309 are cytoplasmic; the sequence is VRVTSST. A helical membrane pass occupies residues 310 to 329; that stretch reads TYSMVGALNKLPIALSGLIF. Topologically, residues 330–332 are lumenal; that stretch reads FEA. A helical membrane pass occupies residues 333-355; sequence AVNFWSVSSIFVGFGAGLVYAVA. Over 356 to 371 the chain is Cytoplasmic; the sequence is KQKQQKEQSQQLPTTK.

It belongs to the TPT transporter family. SLC35D subfamily. Homooligomer.

The protein resides in the golgi apparatus membrane. It localises to the cytoplasmic vesicle membrane. The protein localises to the endoplasmic reticulum membrane. Functionally, involved in the import of GDP-mannose from the cytoplasm into the Golgi lumen. Involved in hyphal formation. This is GDP-mannose transporter (VRG4) from Candida albicans (strain SC5314 / ATCC MYA-2876) (Yeast).